A 39-amino-acid polypeptide reads, in one-letter code: U1-ectatotoxin-Et1b subunit A (39 aa).

The cysteines at positions 14 and 35 are disulfide-linked.

This sequence belongs to the ectatomin family. Ectatomin-Et subfamily. In terms of assembly, heterodimer of subunits A and B; disulfide-linked. As to expression, expressed by the venom gland.

The protein localises to the secreted. It is found in the target cell membrane. The sequence is that of U1-ectatotoxin-Et1b subunit A from Ectatomma tuberculatum (Selva ant).